The sequence spans 341 residues: Anthranilate phosphoribosyltransferase (341 aa).

5-phospho-alpha-D-ribose 1-diphosphate contacts are provided by residues glycine 79, 82–83 (GD), threonine 87, 89–92 (NIST), 107–115 (KHGNRAVSS), and serine 119. Glycine 79 provides a ligand contact to anthranilate. Serine 91 provides a ligand contact to Mg(2+). Asparagine 110 serves as a coordination point for anthranilate. Arginine 165 is an anthranilate binding site. Aspartate 224 and glutamate 225 together coordinate Mg(2+).

Belongs to the anthranilate phosphoribosyltransferase family. Homodimer. The cofactor is Mg(2+).

It catalyses the reaction N-(5-phospho-beta-D-ribosyl)anthranilate + diphosphate = 5-phospho-alpha-D-ribose 1-diphosphate + anthranilate. Its pathway is amino-acid biosynthesis; L-tryptophan biosynthesis; L-tryptophan from chorismate: step 2/5. Functionally, catalyzes the transfer of the phosphoribosyl group of 5-phosphorylribose-1-pyrophosphate (PRPP) to anthranilate to yield N-(5'-phosphoribosyl)-anthranilate (PRA). This Bacillus cereus (strain G9842) protein is Anthranilate phosphoribosyltransferase.